We begin with the raw amino-acid sequence, 360 residues long: MSVHLTEGRRIIQYTGFDDIDEEDVEPNEEAEGPGGVHKKRRGARKKNRRQRMEGLENVDQTVDLQLVTVPKVVPFRASRLLQEIYDRERVHGMRRDEARQLLEDKLLFLEEKSLENLHLRRFCLVVPSDEHFQLDDGSKIPSEIVSISMENGKISSILRVFPSKTRSFEMESVENFQSHRMRRVYWNPSIPKDSNSMFRTWNHFLDGCLLSLLLVPLNKLTQVLEFLRKINEMRTVINNRITVSICLSRVICVEDYLSAVQKVMNTRTVQLDHIPSMDLPSLHFALDFSRYHIQSMNTIFTGSTEMDKLSDENSSHELVEFSSWSCHREAHINMEPEKYHRILHWLWDLSPVNPVDEAE.

The segment covering 22-32 (EEDVEPNEEAE) has biased composition (acidic residues). Residues 22–55 (EEDVEPNEEAEGPGGVHKKRRGARKKNRRQRMEG) form a disordered region. Residues 37–50 (VHKKRRGARKKNRR) show a composition bias toward basic residues.

This is an uncharacterized protein from Caenorhabditis elegans.